Consider the following 406-residue polypeptide: Acetate kinase (406 aa).

Asn-8 lines the Mg(2+) pocket. ATP is bound at residue Lys-15. Position 92 (Arg-92) interacts with substrate. Residue Asp-149 is the Proton donor/acceptor of the active site. Residues 209 to 213 (HLGNG), 283 to 285 (DFR), and 331 to 335 (GVGEN) each bind ATP. Glu-385 is a binding site for Mg(2+).

The protein belongs to the acetokinase family. Homodimer. Mg(2+) is required as a cofactor. It depends on Mn(2+) as a cofactor.

The protein localises to the cytoplasm. The enzyme catalyses acetate + ATP = acetyl phosphate + ADP. Its pathway is metabolic intermediate biosynthesis; acetyl-CoA biosynthesis; acetyl-CoA from acetate: step 1/2. Functionally, catalyzes the formation of acetyl phosphate from acetate and ATP. Can also catalyze the reverse reaction. In Corynebacterium aurimucosum (strain ATCC 700975 / DSM 44827 / CIP 107346 / CN-1) (Corynebacterium nigricans), this protein is Acetate kinase.